Reading from the N-terminus, the 284-residue chain is Quinate/shikimate dehydrogenase (NAD(+)) (284 aa).

Serine 18 and threonine 70 together coordinate shikimate. L-quinate contacts are provided by residues 18–20 (SRT) and threonine 70. The Proton acceptor role is filled by tyrosine 73. Shikimate contacts are provided by lysine 74, asparagine 95, and aspartate 111. 3 residues coordinate L-quinate: lysine 74, asparagine 95, and aspartate 111. NAD(+)-binding positions include 137 to 138 (GG), aspartate 159, arginine 164, 203 to 206 (TPMG), alanine 214, valine 229, and glycine 252. Glutamine 259 contacts shikimate. An L-quinate-binding site is contributed by glutamine 259.

Belongs to the shikimate dehydrogenase family. In terms of assembly, homodimer.

It carries out the reaction L-quinate + NAD(+) = 3-dehydroquinate + NADH + H(+). It catalyses the reaction shikimate + NAD(+) = 3-dehydroshikimate + NADH + H(+). Its pathway is metabolic intermediate biosynthesis; chorismate biosynthesis; chorismate from D-erythrose 4-phosphate and phosphoenolpyruvate: step 4/7. It participates in aromatic compound metabolism; 3,4-dihydroxybenzoate biosynthesis; 3-dehydroquinate from D-quinate (NAD(+) route). Its function is as follows. Involved in the biosynthesis of the chorismate, which leads to the biosynthesis of aromatic amino acids, and plays a key role in the quinate degradation pathway. Catalyzes the NAD(+)-dependent oxidation of both quinate and shikimate to 3-dehydroquinate and 3-dehydroshikimate, respectively. It can only use NAD. This is Quinate/shikimate dehydrogenase (NAD(+)) from Corynebacterium efficiens (strain DSM 44549 / YS-314 / AJ 12310 / JCM 11189 / NBRC 100395).